The chain runs to 276 residues: Undecaprenyl-diphosphatase (276 aa).

The next 6 membrane-spanning stretches (helical) occupy residues 43-63, 85-105, 109-129, 183-203, 214-234, and 249-269; these read RAMA…VWEF, ANLL…ADLI, LFNP…MLWA, AATE…AVYS, SDLP…MIAV, and FAWY…FGWV.

This sequence belongs to the UppP family.

It localises to the cell inner membrane. It catalyses the reaction di-trans,octa-cis-undecaprenyl diphosphate + H2O = di-trans,octa-cis-undecaprenyl phosphate + phosphate + H(+). Catalyzes the dephosphorylation of undecaprenyl diphosphate (UPP). Confers resistance to bacitracin. The protein is Undecaprenyl-diphosphatase of Pseudomonas putida (strain W619).